The chain runs to 466 residues: Ribosomal protein uS12 methylthiotransferase RimO (466 aa).

The region spanning 31–141 is the MTTase N-terminal domain; sequence PTIGMVSLGC…VLDAVHGAVP (111 aa). 6 residues coordinate [4Fe-4S] cluster: C40, C76, C105, C172, C176, and C179. The 240-residue stretch at 158–397 folds into the Radical SAM core domain; it reads LTPRHYSYLK…MAKAQAISEA (240 aa). The 67-residue stretch at 400–466 folds into the TRAM domain; that stretch reads AARVGQVIEV…GEYDLWGRLR (67 aa).

The protein belongs to the methylthiotransferase family. RimO subfamily. It depends on [4Fe-4S] cluster as a cofactor.

It localises to the cytoplasm. It catalyses the reaction L-aspartate(89)-[ribosomal protein uS12]-hydrogen + (sulfur carrier)-SH + AH2 + 2 S-adenosyl-L-methionine = 3-methylsulfanyl-L-aspartate(89)-[ribosomal protein uS12]-hydrogen + (sulfur carrier)-H + 5'-deoxyadenosine + L-methionine + A + S-adenosyl-L-homocysteine + 2 H(+). Functionally, catalyzes the methylthiolation of an aspartic acid residue of ribosomal protein uS12. This is Ribosomal protein uS12 methylthiotransferase RimO from Ruegeria pomeroyi (strain ATCC 700808 / DSM 15171 / DSS-3) (Silicibacter pomeroyi).